A 450-amino-acid polypeptide reads, in one-letter code: Bestrophin homolog 1 (450 aa).

The Cytoplasmic segment spans residues 1 to 31 (MTINYHKEIMTSHPWTFFLLLFKWKGSIWKA). Residues 32-51 (VYMETIIFLICYGIISVIYK) traverse the membrane as a helical segment. Residues 52-60 (TAMGESSQR) are Extracellular-facing. A helical transmembrane segment spans residues 61–82 (TFESLVRYFDKRLSYIPLEFVL). The Cytoplasmic segment spans residues 83–242 (GFFVTTVVNR…DWVPLPLMYP (160 aa)). Residues 243–260 (QLVCLAVNLYFLVSIIAR) traverse the membrane as a helical segment. Residues 261–278 (QLVIEKHKMVDEVDVYFP) lie on the Extracellular side of the membrane. Residues 279-292 (VMTFLQFIFYMGWL) traverse the membrane as a helical segment. Topologically, residues 293–450 (KVIDVMLNPF…WKIPTNPQKF (158 aa)) are cytoplasmic. Residues Asn300, Asp305, and Asp308 each contribute to the Ca(2+) site.

This sequence belongs to the anion channel-forming bestrophin (TC 1.A.46) family. Calcium-sensitive chloride channel subfamily. In terms of assembly, forms oligomers.

The protein resides in the cell membrane. It catalyses the reaction chloride(in) = chloride(out). Its function is as follows. Ligand-gated anion channel that allows the movement of chloride monoatomic anions across cell membranes when activated by Calcium (Ca2+). This Caenorhabditis elegans protein is Bestrophin homolog 1 (best-1).